Reading from the N-terminus, the 539-residue chain is 3-methylmercaptopropionyl-CoA ligase (539 aa).

Thr-185 is a binding site for Mg(2+). Residues His-231, Gly-303, His-324, Ala-325, and Ser-329 each contribute to the ATP site. Position 330 (Glu-330) interacts with Mg(2+). ATP-binding residues include Gln-359, Asp-417, Arg-432, and Lys-523.

It belongs to the ATP-dependent AMP-binding enzyme family. Homodimer. Mg(2+) is required as a cofactor.

It catalyses the reaction 3-(methylsulfanyl)propanoate + ATP + CoA = 3-(methylsulfanyl)propanoyl-CoA + AMP + diphosphate. It participates in lipid metabolism; fatty acid metabolism. With respect to regulation, activated by LiCl and NH(4)Cl. Inhibited by dimethylsulfoniopropionate (DMSP). MMPA concentrations above 2 mM relieve the DMSP inhibition and 80% of activity is regained at an MMPA concentration of 8 mM. Its function is as follows. Involved in the assimilation of dimethylsulphoniopropionate (DMSP), an important compound in the fixation of carbon in marine phytoplankton. Catalyzes the ATP-dependent ligation of methylmercaptopropionate (MMPA) and CoA to yield methylmercaptopropionate-CoA (MMPA-CoA). It is also active with short-chain-fatty-acid (carboxylic acids up to six carbons in length). This is 3-methylmercaptopropionyl-CoA ligase from Ruegeria pomeroyi (strain ATCC 700808 / DSM 15171 / DSS-3) (Silicibacter pomeroyi).